The chain runs to 465 residues: Cytochrome c peroxidase Ccp (465 aa).

Over 1–6 (MKMVSR) the chain is Cytoplasmic. A helical transmembrane segment spans residues 7–27 (ITAIGLAGVAICYLGLSGYVW). The Periplasmic segment spans residues 28–465 (YHDNKRSKQA…VYTPYMQDKQ (438 aa)). Cytochrome c domains lie at 42–155 (SAVS…AKQR), 185–287 (QKVA…EKDP), and 337–454 (AQQK…HSLN). Heme c contacts are provided by C59, C62, H63, M125, C207, C210, H211, C351, C354, H355, and M429.

The recombinant enzyme lacking its transmembrane domain is a monomer in solution. Requires heme c as cofactor.

The protein localises to the cell inner membrane. Does not require reductive activation for maximum activity, as peroxidatic heme is high-spin His/OH(-) 6-coordinated. Calcium ions are needed to attain maximum peroxidase activity. Functionally, cytochrome peroxidase that enables anaerobic respiration with H(2)O(2) as a terminal electron acceptor. It receives electrons from the quinol pool. Menaquinol is probably the electron donor in vivo. It can use menadiol (a menaquinol analog), hydroquinone, duroquinol and the artificial electron donor ABTS(2-) in vitro, but only menadiol and hydroquinone can efficiently transfer electrons to Ccp, maintaining the catalytic activity of the enzyme. It enables E.coli to grow on a nonfermentable carbon source when H(2)O(2) is supplied. Plays a role in the peroxide stress response under anaerobic conditions. However, it does not degrade H(2)O(2) quickly enough to lower the periplasmic H(2)O(2) level below that of the surrounding medium and protect the cell from its toxic effects. The protein is Cytochrome c peroxidase Ccp of Escherichia coli (strain K12).